Here is a 222-residue protein sequence, read N- to C-terminus: Leucyl/phenylalanyl-tRNA--protein transferase (222 aa).

This sequence belongs to the L/F-transferase family.

The protein localises to the cytoplasm. The catalysed reaction is N-terminal L-lysyl-[protein] + L-leucyl-tRNA(Leu) = N-terminal L-leucyl-L-lysyl-[protein] + tRNA(Leu) + H(+). It carries out the reaction N-terminal L-arginyl-[protein] + L-leucyl-tRNA(Leu) = N-terminal L-leucyl-L-arginyl-[protein] + tRNA(Leu) + H(+). It catalyses the reaction L-phenylalanyl-tRNA(Phe) + an N-terminal L-alpha-aminoacyl-[protein] = an N-terminal L-phenylalanyl-L-alpha-aminoacyl-[protein] + tRNA(Phe). Its function is as follows. Functions in the N-end rule pathway of protein degradation where it conjugates Leu, Phe and, less efficiently, Met from aminoacyl-tRNAs to the N-termini of proteins containing an N-terminal arginine or lysine. The protein is Leucyl/phenylalanyl-tRNA--protein transferase of Legionella pneumophila (strain Lens).